A 424-amino-acid chain; its full sequence is Arogenate dehydratase 4, chloroplastic (424 aa).

Residues 1–34 (MQAATSCDLKFRSTDPTSRNKCFSHAIPKRVAVT) constitute a chloroplast transit peptide. The Prephenate dehydratase domain maps to 126–303 (RVAYQGVPGA…NVTRFLMLAR (178 aa)). The region spanning 319-410 (VFAAQEHKGT…SFLRVLGSYP (92 aa)) is the ACT domain.

As to expression, expressed in roots, leaves, stems, flowers and siliques. More abundant in stems and roots.

Its subcellular location is the plastid. The protein localises to the chloroplast stroma. The catalysed reaction is L-arogenate + H(+) = L-phenylalanine + CO2 + H2O. It participates in amino-acid biosynthesis; L-phenylalanine biosynthesis; L-phenylalanine from L-arogenate: step 1/1. Its function is as follows. Converts the prephenate produced from the shikimate-chorismate pathway into phenylalanine. The polypeptide is Arogenate dehydratase 4, chloroplastic (Arabidopsis thaliana (Mouse-ear cress)).